Consider the following 121-residue polypeptide: Putative iron-sulfur cluster insertion protein ErpA (121 aa).

Iron-sulfur cluster is bound by residues Cys-49, Cys-113, and Cys-115.

It belongs to the HesB/IscA family. Homodimer. Iron-sulfur cluster serves as cofactor.

Its function is as follows. Required for insertion of 4Fe-4S clusters. This chain is Putative iron-sulfur cluster insertion protein ErpA, found in Nitrosomonas europaea (strain ATCC 19718 / CIP 103999 / KCTC 2705 / NBRC 14298).